The sequence spans 174 residues: MNYFELFKFSPAFDIDTALLAERYRELQRAVHPDKFANDTEQQKLLSVQRTAQVNDGFQTLKDPIRRAEHMLSLRGIELSHETTTVKDTGFLMQQMEWREALEDIRDSDDPQASIDELYQSFAQYRAQLTQQLTQLLTSEQAEDALLAADQVRKLKFMAKLHDELTRVEDALLD.

The J domain occupies 2-74; it reads NYFELFKFSP…IRRAEHMLSL (73 aa).

It belongs to the HscB family. As to quaternary structure, interacts with HscA and stimulates its ATPase activity.

Co-chaperone involved in the maturation of iron-sulfur cluster-containing proteins. Seems to help targeting proteins to be folded toward HscA. The polypeptide is Co-chaperone protein HscB homolog (Shewanella baltica (strain OS223)).